The following is a 146-amino-acid chain: Anti-sigma F factor (146 aa).

The protein belongs to the anti-sigma-factor family.

The enzyme catalyses L-seryl-[protein] + ATP = O-phospho-L-seryl-[protein] + ADP + H(+). It carries out the reaction L-threonyl-[protein] + ATP = O-phospho-L-threonyl-[protein] + ADP + H(+). Functionally, binds to sigma F and blocks its ability to form an RNA polymerase holoenzyme (E-sigma F). Phosphorylates SpoIIAA on a serine residue. This phosphorylation may enable SpoIIAA to act as an anti-anti-sigma factor that counteracts SpoIIAB and thus releases sigma F from inhibition. The polypeptide is Anti-sigma F factor (Geobacillus stearothermophilus (Bacillus stearothermophilus)).